A 63-amino-acid chain; its full sequence is Antimicrobial peptide 2 (63 aa).

The signal sequence occupies residues 1 to 27 (MAKVPIAFLKFVIVLILFIAMSGMIEA). Intrachain disulfides connect cysteine 28–cysteine 45, cysteine 35–cysteine 49, and cysteine 44–cysteine 60.

Belongs to the AMP family. Homodimer. Seed specific.

It is found in the secreted. Its function is as follows. Possesses antifungal activity and is also active on two tested Gram-positive bacteria but is non-toxic for Gram-negative bacteria and cultured human cells. This is Antimicrobial peptide 2 (AMP2) from Mirabilis jalapa (Garden four-o'clock).